The primary structure comprises 234 residues: Ubiquinone biosynthesis O-methyltransferase (234 aa).

4 residues coordinate S-adenosyl-L-methionine: R40, G59, D80, and M123.

This sequence belongs to the methyltransferase superfamily. UbiG/COQ3 family.

The catalysed reaction is a 3-demethylubiquinol + S-adenosyl-L-methionine = a ubiquinol + S-adenosyl-L-homocysteine + H(+). It catalyses the reaction a 3-(all-trans-polyprenyl)benzene-1,2-diol + S-adenosyl-L-methionine = a 2-methoxy-6-(all-trans-polyprenyl)phenol + S-adenosyl-L-homocysteine + H(+). It participates in cofactor biosynthesis; ubiquinone biosynthesis. In terms of biological role, O-methyltransferase that catalyzes the 2 O-methylation steps in the ubiquinone biosynthetic pathway. This chain is Ubiquinone biosynthesis O-methyltransferase, found in Coxiella burnetii (strain CbuG_Q212) (Coxiella burnetii (strain Q212)).